Consider the following 112-residue polypeptide: Integration host factor subunit alpha (112 aa).

This sequence belongs to the bacterial histone-like protein family. Heterodimer of an alpha and a beta chain.

Its function is as follows. This protein is one of the two subunits of integration host factor, a specific DNA-binding protein that functions in genetic recombination as well as in transcriptional and translational control. The polypeptide is Integration host factor subunit alpha (Rhizobium etli (strain ATCC 51251 / DSM 11541 / JCM 21823 / NBRC 15573 / CFN 42)).